A 258-amino-acid polypeptide reads, in one-letter code: MLDAMREKPPLVHCITNYVAMNIAANVLLASGASPAMVHAPEEAGEFAGIASALTVNIGTLSTQWIDGMQAAAKAAASAGKPWVLDPVAHYATTFRRQAVADLLALKPTIIRGNASEIIALAGGESRGQGVDSRDPVEQAEDSARRLAERQQAIVAVTGAVDFVTDGERAVRIKGGSVLMPEVTALGCSLTCLIGAFAATAPEDLFGATVAALATFAVAGEDAALGAAGPGSFAWRFLDALAALDGEALDARARVSLA.

M37 provides a ligand contact to substrate. Positions 112 and 158 each coordinate ATP. A185 is a substrate binding site.

The protein belongs to the Thz kinase family. It depends on Mg(2+) as a cofactor.

It catalyses the reaction 5-(2-hydroxyethyl)-4-methylthiazole + ATP = 4-methyl-5-(2-phosphooxyethyl)-thiazole + ADP + H(+). It participates in cofactor biosynthesis; thiamine diphosphate biosynthesis; 4-methyl-5-(2-phosphoethyl)-thiazole from 5-(2-hydroxyethyl)-4-methylthiazole: step 1/1. Its function is as follows. Catalyzes the phosphorylation of the hydroxyl group of 4-methyl-5-beta-hydroxyethylthiazole (THZ). The chain is Hydroxyethylthiazole kinase from Rhizobium etli (strain ATCC 51251 / DSM 11541 / JCM 21823 / NBRC 15573 / CFN 42).